We begin with the raw amino-acid sequence, 450 residues long: Tubulin beta-3 chain (450 aa).

The MREI motif motif lies at 1-4 (MREI). GTP contacts are provided by glutamine 11, glutamate 69, serine 138, glycine 142, threonine 143, and glycine 144. Position 69 (glutamate 69) interacts with Mg(2+). Serine 172 is subject to Phosphoserine; by CDK1. The GTP site is built by asparagine 204 and asparagine 226. A disordered region spans residues 422 to 450 (YQQYQDATAEEEGEMYEDDDEESEAQGPK). Acidic residues predominate over residues 429-450 (TAEEEGEMYEDDDEESEAQGPK). Glutamate 438 carries the 5-glutamyl polyglutamate modification. Serine 444 is modified (phosphoserine).

This sequence belongs to the tubulin family. In terms of assembly, heterodimer of alpha- and beta-tubulin. A typical microtubule is a hollow water-filled tube with an outer diameter of 25 nm and an inner diameter of 15 nM. Alpha-beta heterodimers associate head-to-tail to form protofilaments running lengthwise along the microtubule wall with the beta-tubulin subunit facing the microtubule plus end conferring a structural polarity. Microtubules usually have 13 protofilaments but different protofilament numbers can be found in some organisms and specialized cells. Interacts with gamma-tubulin; the interaction allows microtubules to nucleate from the gamma-tubulin ring complex (gTuRC). Interacts with UNC5C (via cytoplasmic domain); this interaction is decreased by NTN1/Netrin-1. Interacts with NLRP5/MATER at cytoskeleton microtubules. Interacts with DPYSL5. Interacts with CFAP61. The cofactor is Mg(2+). In terms of processing, some glutamate residues at the C-terminus are polyglycylated, resulting in polyglycine chains on the gamma-carboxyl group. Glycylation is mainly limited to tubulin incorporated into axonemes (cilia and flagella) whereas glutamylation is prevalent in neuronal cells, centrioles, axonemes, and the mitotic spindle. Both modifications can coexist on the same protein on adjacent residues, and lowering polyglycylation levels increases polyglutamylation, and reciprocally. Cilia and flagella glycylation is required for their stability and maintenance. Flagella glycylation controls sperm motility. Some glutamate residues at the C-terminus are polyglutamylated, resulting in polyglutamate chains on the gamma-carboxyl group. Polyglutamylation plays a key role in microtubule severing by spastin (SPAST). SPAST preferentially recognizes and acts on microtubules decorated with short polyglutamate tails: severing activity by SPAST increases as the number of glutamates per tubulin rises from one to eight, but decreases beyond this glutamylation threshold. Glutamylation is also involved in cilia motility. Post-translationally, phosphorylated on Ser-172 by CDK1 during the cell cycle, from metaphase to telophase, but not in interphase. This phosphorylation inhibits tubulin incorporation into microtubules.

The protein resides in the cytoplasm. It is found in the cytoskeleton. The protein localises to the cell projection. It localises to the growth cone. Its subcellular location is the lamellipodium. The protein resides in the filopodium. Tubulin is the major constituent of microtubules, protein filaments consisting of alpha- and beta-tubulin heterodimers. Microtubules grow by the addition of GTP-tubulin dimers to the microtubule end, where a stabilizing cap forms. Below the cap, alpha-beta tubulin heterodimers are in GDP-bound state, owing to GTPase activity of alpha-tubulin. TUBB3 plays a critical role in proper axon guidance and maintenance. Binding of NTN1/Netrin-1 to its receptor UNC5C might cause dissociation of UNC5C from polymerized TUBB3 in microtubules and thereby lead to increased microtubule dynamics and axon repulsion. Plays a role in dorsal root ganglion axon projection towards the spinal cord. The chain is Tubulin beta-3 chain (Tubb3) from Rattus norvegicus (Rat).